Here is a 573-residue protein sequence, read N- to C-terminus: Pyrophosphate--fructose 6-phosphate 1-phosphotransferase (573 aa).

G90 contributes to the diphosphate binding site. D184 provides a ligand contact to Mg(2+). Residues 212 to 214 (TID), 251 to 252 (KY), 259 to 261 (MGR), E320, and 434 to 437 (YEGR) contribute to the substrate site. The active-site Proton acceptor is the D214.

The protein belongs to the phosphofructokinase type A (PFKA) family. PPi-dependent PFK group II subfamily. Clade 'Long' sub-subfamily. In terms of assembly, homodimer. Mg(2+) is required as a cofactor.

It is found in the cytoplasm. The catalysed reaction is beta-D-fructose 6-phosphate + diphosphate = beta-D-fructose 1,6-bisphosphate + phosphate + H(+). Its pathway is carbohydrate degradation; glycolysis; D-glyceraldehyde 3-phosphate and glycerone phosphate from D-glucose: step 3/4. Non-allosteric. In terms of biological role, catalyzes the phosphorylation of D-fructose 6-phosphate, the first committing step of glycolysis. Uses inorganic phosphate (PPi) as phosphoryl donor instead of ATP like common ATP-dependent phosphofructokinases (ATP-PFKs), which renders the reaction reversible, and can thus function both in glycolysis and gluconeogenesis. Consistently, PPi-PFK can replace the enzymes of both the forward (ATP-PFK) and reverse (fructose-bisphosphatase (FBPase)) reactions. The polypeptide is Pyrophosphate--fructose 6-phosphate 1-phosphotransferase (Treponema pallidum (strain Nichols)).